A 187-amino-acid chain; its full sequence is dCTP deaminase, dUMP-forming (187 aa).

Residues 101–106, Asp-119, 127–129, Gln-148, Tyr-162, Lys-170, and Gln-174 contribute to the dCTP site; these read KSSLGR and TLE. Catalysis depends on Glu-129, which acts as the Proton donor/acceptor.

It belongs to the dCTP deaminase family. Homotrimer.

The enzyme catalyses dCTP + 2 H2O = dUMP + NH4(+) + diphosphate. It functions in the pathway pyrimidine metabolism; dUMP biosynthesis; dUMP from dCTP: step 1/1. Its function is as follows. Bifunctional enzyme that catalyzes both the deamination of dCTP to dUTP and the hydrolysis of dUTP to dUMP without releasing the toxic dUTP intermediate. This Corynebacterium diphtheriae (strain ATCC 700971 / NCTC 13129 / Biotype gravis) protein is dCTP deaminase, dUMP-forming.